The chain runs to 297 residues: N-acetylneuraminate lyase (297 aa).

Serine 47 and threonine 48 together coordinate aceneuramate. The active-site Proton donor is tyrosine 137. Lysine 165 functions as the Schiff-base intermediate with substrate in the catalytic mechanism. Residues threonine 167, glycine 189, aspartate 191, glutamate 192, and serine 208 each contribute to the aceneuramate site.

This sequence belongs to the DapA family. NanA subfamily. As to quaternary structure, homotetramer.

The protein localises to the cytoplasm. It carries out the reaction aceneuramate = aldehydo-N-acetyl-D-mannosamine + pyruvate. Its pathway is amino-sugar metabolism; N-acetylneuraminate degradation; D-fructose 6-phosphate from N-acetylneuraminate: step 1/5. In terms of biological role, catalyzes the reversible aldol cleavage of N-acetylneuraminic acid (sialic acid; Neu5Ac) to form pyruvate and N-acetylmannosamine (ManNAc) via a Schiff base intermediate. This is N-acetylneuraminate lyase from Citrobacter koseri (strain ATCC BAA-895 / CDC 4225-83 / SGSC4696).